Consider the following 397-residue polypeptide: Acetate kinase (397 aa).

Position 7 (Asn7) interacts with Mg(2+). Position 14 (Lys14) interacts with ATP. Substrate is bound at residue Arg90. Asp147 acts as the Proton donor/acceptor in catalysis. ATP is bound by residues 207-211 (HLGNG), 282-284 (DFR), and 330-334 (GLGEN). Glu383 contributes to the Mg(2+) binding site.

The protein belongs to the acetokinase family. Homodimer. Mg(2+) is required as a cofactor. It depends on Mn(2+) as a cofactor.

It localises to the cytoplasm. The enzyme catalyses acetate + ATP = acetyl phosphate + ADP. The protein operates within metabolic intermediate biosynthesis; acetyl-CoA biosynthesis; acetyl-CoA from acetate: step 1/2. Functionally, catalyzes the formation of acetyl phosphate from acetate and ATP. Can also catalyze the reverse reaction. The polypeptide is Acetate kinase (Clostridium botulinum (strain Kyoto / Type A2)).